We begin with the raw amino-acid sequence, 377 residues long: UPF0754 membrane protein YheB (377 aa).

Helical transmembrane passes span 1–21 and 357–377; these read MGIA…GAVT and YLGG…VILF.

This sequence belongs to the UPF0754 family.

Its subcellular location is the cell membrane. The protein is UPF0754 membrane protein YheB (yheB) of Bacillus subtilis (strain 168).